Here is a 20-residue protein sequence, read N- to C-terminus: Fibrinolytic zinc metalloproteinase (20 aa).

The 14-residue stretch at R7–N20 folds into the Peptidase M12B domain.

The cofactor is Zn(2+).

The protein localises to the secreted. Functionally, hydrolyzes alpha and beta chains of human fibrinogen and human fibrin. No activity against the gamma chain of human fibrinogen, human thrombin, bovine serum albumin, ovalbumin and hemoglobin. Has anticoagulant activity on human plasma and protects mice against death due from experimentally induced platelet thromboembolism with an ED(50) of 40 ug/kg. The protein is Fibrinolytic zinc metalloproteinase of Ganoderma lucidum (Ling zhi medicinal fungus).